The chain runs to 495 residues: Cytochrome P450 monooxygenase cnsC (495 aa).

A heme-binding site is contributed by Cys-434.

It belongs to the cytochrome P450 family. It depends on heme as a cofactor.

It functions in the pathway alkaloid biosynthesis. In terms of biological role, cytochrome P450 monooxygenase; part of the gene cluster that mediates the biosynthesis of communesins, a prominent class of indole alkaloids with great potential as pharmaceuticals. Communesins are biosynthesized by the coupling of tryptamine and aurantioclavine, two building blocks derived from L-tryptophan. The L-tryptophan decarboxylase cnsB converts L-tryptophan to tryptamine, whereas the tryptophan dimethylallyltransferase cnsF converts L-tryptophan to 4-dimethylallyl tryptophan which is further transformed to aurantioclavine by the aurantioclavine synthase cnsA, probably aided by the catalase cnsD. The cytochrome P450 monooxygenase cnsC catalyzes the heterodimeric coupling between the two different indole moieties, tryptamine and aurantioclavine, to construct vicinal quaternary stereocenters and yield the heptacyclic communesin scaffold. The O-methyltransferase cnsE then methylates the communesin scaffold to produce communesin K, the simplest characterized communesin that contains the heptacyclic core. The dioxygenase cnsJ converts communesin K into communesin I. Acylation to introduce the hexadienyl group at position N16 of communesin I by the acyltransferase cnsK leads to the production of communesin B. The hexadienyl group is produced by the highly reducing polyketide synthase cnsI, before being hydrolytically removed from cnsI by the serine hydrolase cnsH, converted into hexadienyl-CoA by the CoA ligase cnsG, and then transferred to communesin I by cnsK. Surprisingly, cnsK may also be a promiscuous acyltransferase that can tolerate a range of acyl groups, including acetyl-, propionyl-, and butyryl-CoA, which lead to communesins A, G and H respectively. The roles of the alpha-ketoglutarate-dependent dioxygenases cnsM and cnsP have still to be determined. This is Cytochrome P450 monooxygenase cnsC from Penicillium expansum (Blue mold rot fungus).